Consider the following 520-residue polypeptide: Probable helicase MJECL08 (520 aa).

Residues arginine 162, 171-176 (GAGKSN), and 501-502 (KI) each bind ATP.

This sequence belongs to the HerA family.

The enzyme catalyses Couples ATP hydrolysis with the unwinding of duplex DNA at the replication fork by translocating in the 5'-3' direction. This creates two antiparallel DNA single strands (ssDNA). The leading ssDNA polymer is the template for DNA polymerase III holoenzyme which synthesizes a continuous strand.. It carries out the reaction ATP + H2O = ADP + phosphate + H(+). The catalysed reaction is Couples ATP hydrolysis with the unwinding of duplex DNA by translocating in the 3'-5' direction.. Functionally, a probably bidirectional DNA helicase. This chain is Probable helicase MJECL08, found in Methanocaldococcus jannaschii (strain ATCC 43067 / DSM 2661 / JAL-1 / JCM 10045 / NBRC 100440) (Methanococcus jannaschii).